Reading from the N-terminus, the 81-residue chain is Small ribosomal subunit protein bS18 (81 aa).

Belongs to the bacterial ribosomal protein bS18 family. Part of the 30S ribosomal subunit. Forms a tight heterodimer with protein bS6.

Binds as a heterodimer with protein bS6 to the central domain of the 16S rRNA, where it helps stabilize the platform of the 30S subunit. This Lactococcus lactis subsp. cremoris (strain MG1363) protein is Small ribosomal subunit protein bS18.